An 82-amino-acid chain; its full sequence is Sodium channel neurotoxin MeuNaTxalpha-3 (82 aa).

The N-terminal stretch at 1 to 8 is a signal peptide; the sequence is LVMAGVES. The 71-residue stretch at 10–80 folds into the LCN-type CS-alpha/beta domain; the sequence is RDGHIARNNN…VPIKVPGDCH (71 aa). 4 cysteine pairs are disulfide-bonded: cysteine 20/cysteine 79, cysteine 24/cysteine 52, cysteine 38/cysteine 62, and cysteine 42/cysteine 64.

Expressed by the venom gland.

It localises to the secreted. Its function is as follows. Alpha toxins bind voltage-independently at site-3 of sodium channels (Nav) and inhibit the inactivation of the activated channels, thereby blocking neuronal transmission. In Mesobuthus eupeus (Lesser Asian scorpion), this protein is Sodium channel neurotoxin MeuNaTxalpha-3.